Reading from the N-terminus, the 566-residue chain is APC/C activator protein CDH1 (566 aa).

Polar residues predominate over residues 1 to 18; that stretch reads MSTNLNPFMNNTPSSSPL. The disordered stretch occupies residues 1–56; that stretch reads MSTNLNPFMNNTPSSSPLKGSESKRVSKRPISSSSSASLLSSPSRRSRPSTVYGDR. Positions 29–44 are enriched in low complexity; it reads RPISSSSSASLLSSPS. The C-box motif lies at 55-61; that stretch reads DRYIPSR. The residue at position 213 (S213) is a Phosphoserine. WD repeat units lie at residues 258–298, 300–339, 342–379, 383–422, 425–467, 469–510, and 513–552; these read PSLA…VVHL, DTENEYTSLSWIGAGSHLAVGQANGLVEIYDVMKRKCIRT, GHIDRVACLSWNNHVLTSGSRDHRILHRDVRMPDPFFE, SHTQEVCGLKWNVADNKLASGGNDNVVHVYEGTSKSPILT, EHKA…KMSD, DSGS…PIAI, and GHSFRVLHLTLSNDGTTVVSGAGDETLRYWKLFDKPKAKV.

Belongs to the WD repeat CDC20/Fizzy family. As to quaternary structure, associates with the APC/C complex. Interacts with CLB2, CLB3, CDC5, HSL1, MSN5 and PSE1. In terms of processing, phosphorylated at multiple sites by CDC28, probably in its CLB5 bound form, in S, G2 and M phase of the cell cycle, thereby blocking the association of CDH1 to the APC/C and promoting nuclear export of CDH1 by MSN5. Dephosphorylated and activated by CDC14 in late anaphase, which may be necessary for PSE1-dependent nuclear localization.

The protein localises to the cytoplasm. Its subcellular location is the nucleus. Its function is as follows. Activator protein that regulates the ubiquitin ligase activity and substrate specificity of the anaphase promoting complex/cyclosome (APC/C). During telophase and in the subsequent G1 phase of the cell cycle, recognizes and binds proteins containing a destruction box (D-box) and an additional degradation signal termed the KEN box including ASE1, CDC20, the B-type cyclins CLB2 and CLB3, the polo-like kinase CDC5 and HSL1, and recruits them in a C-box-dependent manner to the APC/C for ubiquitination and subsequent proteolysis. Required for exit from mitosis, cytokinesis and formation of prereplicative complexes in G1. Probably is the target of a BUB2-dependent spindle checkpoint pathway. The sequence is that of APC/C activator protein CDH1 (CDH1) from Saccharomyces cerevisiae (strain ATCC 204508 / S288c) (Baker's yeast).